A 179-amino-acid chain; its full sequence is ATP synthase subunit delta (179 aa).

The protein belongs to the ATPase delta chain family. As to quaternary structure, F-type ATPases have 2 components, F(1) - the catalytic core - and F(0) - the membrane proton channel. F(1) has five subunits: alpha(3), beta(3), gamma(1), delta(1), epsilon(1). F(0) has three main subunits: a(1), b(2) and c(10-14). The alpha and beta chains form an alternating ring which encloses part of the gamma chain. F(1) is attached to F(0) by a central stalk formed by the gamma and epsilon chains, while a peripheral stalk is formed by the delta and b chains.

It localises to the cell inner membrane. Functionally, f(1)F(0) ATP synthase produces ATP from ADP in the presence of a proton or sodium gradient. F-type ATPases consist of two structural domains, F(1) containing the extramembraneous catalytic core and F(0) containing the membrane proton channel, linked together by a central stalk and a peripheral stalk. During catalysis, ATP synthesis in the catalytic domain of F(1) is coupled via a rotary mechanism of the central stalk subunits to proton translocation. This protein is part of the stalk that links CF(0) to CF(1). It either transmits conformational changes from CF(0) to CF(1) or is implicated in proton conduction. This is ATP synthase subunit delta from Delftia acidovorans (strain DSM 14801 / SPH-1).